The following is a 383-amino-acid chain: Protein RecA (383 aa).

79 to 86 serves as a coordination point for ATP; the sequence is GPESSGKT.

The protein belongs to the RecA family.

The protein resides in the cytoplasm. In terms of biological role, can catalyze the hydrolysis of ATP in the presence of single-stranded DNA, the ATP-dependent uptake of single-stranded DNA by duplex DNA, and the ATP-dependent hybridization of homologous single-stranded DNAs. It interacts with LexA causing its activation and leading to its autocatalytic cleavage. This chain is Protein RecA, found in Streptococcus gordonii (strain Challis / ATCC 35105 / BCRC 15272 / CH1 / DL1 / V288).